We begin with the raw amino-acid sequence, 277 residues long: Myelin proteolipid protein (277 aa).

At 2-10 (GLLECCARC) the chain is on the cytoplasmic side. S-palmitoyl cysteine attachment occurs at residues cysteine 6, cysteine 7, and cysteine 10. Residues 11–36 (LIGAPFASLVATGLCFFGVALFCGCG) traverse the membrane as a helical segment. Residues 37-59 (HEALTGTEQLIETYFSKNYQDYE) are Extracellular-facing. The helical transmembrane segment at 60-88 (FLIDVIHGFQYFIYGTAAFFFLYGALLLA) threads the bilayer. At 89 to 151 (EGFYTTGAVR…LGKWLGHPDK (63 aa)) the chain is on the cytoplasmic side. 3 S-palmitoyl cysteine lipidation sites follow: cysteine 109, cysteine 139, and cysteine 141. Residues 152–178 (FVGITYVLTIIWLLVFACSAVPVYIYF) traverse the membrane as a helical segment. At 179–238 (NTWTTCQSIGNPTKTSASIGTLCADARMYGILPWNAFPGKVCGSNLLSICKTSEFQMTFH) the chain is on the extracellular side. 2 disulfides stabilise this stretch: cysteine 184/cysteine 228 and cysteine 201/cysteine 220. Threonine 199 carries O-palmitoyl threonine lipidation. The chain crosses the membrane as a helical span at residues 239 to 268 (LFIAAFVGAAATLVSLVTFIIATTYNFAVL). At 269-277 (RLMGRGTKF) the chain is on the cytoplasmic side.

Belongs to the myelin proteolipid protein family.

The protein localises to the cell membrane. Functionally, this is the major myelin protein from the central nervous system. It plays an important role in the formation or maintenance of the multilamellar structure of myelin. In Taeniopygia guttata (Zebra finch), this protein is Myelin proteolipid protein (PLP1).